The primary structure comprises 445 residues: POU domain, class 3, transcription factor 2 (445 aa).

Disordered regions lie at residues 64–173 (ALSH…WRSA) and 203–269 (LGAG…TPTS). Residues 67–90 (HGGGGGGGGGGGGGGGGGGGGGDG) show a composition bias toward gly residues. 2 stretches are compositionally biased toward low complexity: residues 125-151 (QQQHQQQQQQQQQQQQQQQQQQQQQQQ) and 163-173 (HHPGPGAWRSA). A compositionally biased stretch (basic and acidic residues) spans 217-226 (LRDAHDEPHH). A compositionally biased stretch (basic residues) spans 227-237 (ADHHPHPHSHP). Pro residues predominate over residues 239-253 (QQPPPPPPPQGPPGH). The POU-specific domain occupies 264 to 338 (EDTPTSDDLE…LLNKWLEEAD (75 aa)). Ser-343 carries the phosphoserine modification. The segment at residues 356-415 (KRKKRTSIEVSVKGALESHFLKCPKPSAQEITSLADSLQLEKEVVRVWFCNRRQKEKRMT) is a DNA-binding region (homeobox). The segment at 411–445 (EKRMTPPGGTLPGAEDVYGGSRDTPPHHGVQTPVQ) is disordered.

This sequence belongs to the POU transcription factor family. Class-3 subfamily. Interacts with PQBP1. Interaction with ISL1. Expressed specifically in the neuroectodermal cell lineage.

The protein resides in the nucleus. Functionally, transcription factor that plays a key role in neuronal differentiation. Binds preferentially to the recognition sequence which consists of two distinct half-sites, ('GCAT') and ('TAAT'), separated by a non-conserved spacer region of 0, 2, or 3 nucleotides. Acts as a transcriptional activator when binding cooperatively with SOX4, SOX11, or SOX12 to gene promoters. The combination of three transcription factors, ASCL1, POU3F2/BRN2 and MYT1L, is sufficient to reprogram fibroblasts and other somatic cells into induced neuronal (iN) cells in vitro. Acts downstream of ASCL1, accessing chromatin that has been opened by ASCL1, and promotes transcription of neuronal genes. The sequence is that of POU domain, class 3, transcription factor 2 (Pou3f2) from Mus musculus (Mouse).